The chain runs to 53 residues: MQKYVCDICGYVYDPAVGDPDNGVAPGTAFADLPEDWVCPECGVSKDEFSPEA.

The Rubredoxin-like domain occupies 1–53; it reads MQKYVCDICGYVYDPAVGDPDNGVAPGTAFADLPEDWVCPECGVSKDEFSPEA. Fe cation is bound by residues C6, C9, C39, and C42.

The protein belongs to the rubredoxin family. The cofactor is Fe(3+).

Its function is as follows. Rubredoxin is a small nonheme, iron protein lacking acid-labile sulfide. Its single Fe, chelated to 4 Cys, functions as an electron acceptor and may also stabilize the conformation of the molecule. In Butyribacterium methylotrophicum, this protein is Rubredoxin.